A 72-amino-acid polypeptide reads, in one-letter code: Small ribosomal subunit protein eS17 (72 aa).

The protein belongs to the eukaryotic ribosomal protein eS17 family.

This chain is Small ribosomal subunit protein eS17, found in Nanoarchaeum equitans (strain Kin4-M).